Here is a 370-residue protein sequence, read N- to C-terminus: Chaperone protein DnaJ (370 aa).

Positions 6-70 constitute a J domain; that stretch reads DYYEVLGVQR…EKRSMYDRFG (65 aa). The segment at 128–208 adopts a CR-type zinc-finger fold; it reads GVEKTIEYRR…CRGEGRIRQT (81 aa). Residues Cys-141, Cys-144, Cys-158, Cys-161, Cys-182, Cys-185, Cys-196, and Cys-199 each coordinate Zn(2+). CXXCXGXG motif repeat units follow at residues 141–148, 158–165, 182–189, and 196–203; these read CPACRGSG, CPKCGGLG, CDMCRGEG, and CRECRGEG.

It belongs to the DnaJ family. In terms of assembly, homodimer. The cofactor is Zn(2+).

The protein resides in the cytoplasm. Participates actively in the response to hyperosmotic and heat shock by preventing the aggregation of stress-denatured proteins and by disaggregating proteins, also in an autonomous, DnaK-independent fashion. Unfolded proteins bind initially to DnaJ; upon interaction with the DnaJ-bound protein, DnaK hydrolyzes its bound ATP, resulting in the formation of a stable complex. GrpE releases ADP from DnaK; ATP binding to DnaK triggers the release of the substrate protein, thus completing the reaction cycle. Several rounds of ATP-dependent interactions between DnaJ, DnaK and GrpE are required for fully efficient folding. Also involved, together with DnaK and GrpE, in the DNA replication of plasmids through activation of initiation proteins. This chain is Chaperone protein DnaJ, found in Roseiflexus castenholzii (strain DSM 13941 / HLO8).